The following is a 647-amino-acid chain: MEAGRSADEVLYHNQSSVKLGELERYVITYELYQGDSIPADITLDSLWVKIKNTTKLSYKPAYLLGPFILYCDVRAKDYESSYKIICSADKPVFQSNLQAQQKFIAELSLHHIKPRYVWIVDIVSQILFNKETKVTFEIVVGNSKASLKRKIRCNDSLPDKACNILHTGLSVHRLTTADIWKVPRPIDMSQKSHLVILTHGFQSNVSADMEYLMEEIYKAQMNNPNERLVIKGYMKNACETEKGIKFLGVGLANYIIDELYDDSVGKISFIGHSLGGLTQTFAICYIKTKYPYFFKKVEPINFISLASPLLGIATSTPNYVKMSLSMGIIGTTGQELGLKDGNYGDKPLLYLLSEESLISVLARFKRRTLYANAVNDGIVPLYSSSLLFLDYSQLLQKLGGQTTAPCDPLFQPEVSPIGELPNHSDVANDDDGINASSWNTFWKSKENNCDKKSKRLMNASVIKSMKSVLLSPCPDAKFFSDPDARVATIIHDKIYTEKNLPPPSPTLYEGTAAKEGETRKTRKEMEEIIARRWHKGMHWRKVVVLLKPDAHNNIIVRRRFSNAYGWPVVDHLVTAHFQRDDPIASPMQDKQFAEEDINMATGGVEPNKFYSWLTKIEDPSVYHGGIVSTASQLASSWISKHSSVTD.

Catalysis depends on serine 274, which acts as the Charge relay system. The interval 502 to 523 is disordered; it reads PPPSPTLYEGTAAKEGETRKTR. Positions 513 to 523 are enriched in basic and acidic residues; it reads AAKEGETRKTR.

Belongs to the putative lipase ROG1 family.

Functionally, involved in lipid metabolism. In Saccharomyces cerevisiae (strain ATCC 204508 / S288c) (Baker's yeast), this protein is Putative lipase YDL109C.